We begin with the raw amino-acid sequence, 123 residues long: Photosystem II extrinsic protein U (123 aa).

Positions methionine 1–alanine 28 are cleaved as a signal peptide.

This sequence belongs to the PsbU family. PSII is composed of 1 copy each of membrane proteins PsbA, PsbB, PsbC, PsbD, PsbE, PsbF, PsbH, PsbI, PsbJ, PsbK, PsbL, PsbM, PsbT, PsbX, PsbY, PsbZ, Psb30/Ycf12, peripheral proteins PsbO, CyanoQ (PsbQ), PsbU, PsbV and a large number of cofactors. It forms dimeric complexes.

The protein localises to the cellular thylakoid membrane. In terms of biological role, one of the extrinsic, lumenal subunits of photosystem II (PSII). PSII is a light-driven water plastoquinone oxidoreductase, using light energy to abstract electrons from H(2)O, generating a proton gradient subsequently used for ATP formation. The extrinsic proteins stabilize the structure of photosystem II oxygen-evolving complex (OEC), the ion environment of oxygen evolution and protect the OEC against heat-induced inactivation. This Gloeothece citriformis (strain PCC 7424) (Cyanothece sp. (strain PCC 7424)) protein is Photosystem II extrinsic protein U.